Here is a 530-residue protein sequence, read N- to C-terminus: Pentatricopeptide repeat-containing protein At3g51320 (530 aa).

PPR repeat units lie at residues 82-116 (KLYC…GFVP), 117-151 (DSYT…GCDQ), 152-182 (VLPV…IPKR), 183-217 (DIVS…NIIS), 218-248 (WNIM…GFQG), 249-283 (NEST…FLNS), 284-314 (SVVI…LSIR), 315-349 (NKVT…MLRP), 350-380 (DEVT…MVDE), and 386-420 (NFGH…DVTP). The tract at residues 424–499 (KWANLLSSSR…IPGCGLVDLK (76 aa)) is type E motif.

The protein belongs to the PPR family. PCMP-E subfamily.

The protein is Pentatricopeptide repeat-containing protein At3g51320 of Arabidopsis thaliana (Mouse-ear cress).